We begin with the raw amino-acid sequence, 307 residues long: Dihydroorotate dehydrogenase A (fumarate) (307 aa).

Residues serine 21 and 46 to 47 (KT) each bind FMN. Residues lysine 46, 70–74 (NSVGL), and asparagine 130 each bind substrate. Asparagine 130 is an FMN binding site. The active-site Nucleophile is the cysteine 133. 2 residues coordinate FMN: lysine 168 and isoleucine 194. 195 to 196 (NT) provides a ligand contact to substrate. FMN is bound by residues glycine 220, 246–247 (GG), and 268–269 (GS).

The protein belongs to the dihydroorotate dehydrogenase family. Type 1 subfamily. In terms of assembly, homodimer. FMN is required as a cofactor.

The protein localises to the cytoplasm. It carries out the reaction (S)-dihydroorotate + fumarate = orotate + succinate. It participates in pyrimidine metabolism; UMP biosynthesis via de novo pathway. Functionally, catalyzes the conversion of dihydroorotate to orotate with fumarate as the electron acceptor. This chain is Dihydroorotate dehydrogenase A (fumarate) (pyrD), found in Lactobacillus helveticus (strain DPC 4571).